A 224-amino-acid polypeptide reads, in one-letter code: Octanoyltransferase (224 aa).

Residues 38–213 (SATVDELWWV…YLVRRLGYSA (176 aa)) enclose the BPL/LPL catalytic domain. Substrate-binding positions include 77-84 (RGGQVTYH), 144-146 (SLG), and 157-159 (GLS). The active-site Acyl-thioester intermediate is the cysteine 175.

This sequence belongs to the LipB family.

The protein resides in the cytoplasm. The catalysed reaction is octanoyl-[ACP] + L-lysyl-[protein] = N(6)-octanoyl-L-lysyl-[protein] + holo-[ACP] + H(+). The protein operates within protein modification; protein lipoylation via endogenous pathway; protein N(6)-(lipoyl)lysine from octanoyl-[acyl-carrier-protein]: step 1/2. Its function is as follows. Catalyzes the transfer of endogenously produced octanoic acid from octanoyl-acyl-carrier-protein onto the lipoyl domains of lipoate-dependent enzymes. Lipoyl-ACP can also act as a substrate although octanoyl-ACP is likely to be the physiological substrate. This chain is Octanoyltransferase, found in Nitrosococcus oceani (strain ATCC 19707 / BCRC 17464 / JCM 30415 / NCIMB 11848 / C-107).